The following is a 426-amino-acid chain: Putative acid phosphatase 1 (426 aa).

Residues 1-18 form the signal peptide; it reads MRVLFYVSILVIIASVHT. At 19–388 the chain is on the extracellular side; that stretch reads QLISVHVIFR…SEWVMTPLSW (370 aa). His29 acts as the Nucleophile in catalysis. Residues Asn37 and Asn145 are each glycosylated (N-linked (GlcNAc...) asparagine). The cysteines at positions 133 and 369 are disulfide-linked. The Proton donor role is filled by Asp276. A helical membrane pass occupies residues 389-409; that stretch reads IIVAIAILLLIALILMTYFVI. The Cytoplasmic portion of the chain corresponds to 410–426; the sequence is RYKNRSIVNIKKLSLEN.

The protein belongs to the histidine acid phosphatase family.

The protein localises to the membrane. It catalyses the reaction a phosphate monoester + H2O = an alcohol + phosphate. In Caenorhabditis elegans, this protein is Putative acid phosphatase 1.